The sequence spans 131 residues: MWDTVRWQVLSSDEVEVAPDHRALAWRELIANVARDTPLDYTFRTMLQRADLENFDYNTPIVYNVKRKELIVLNERMRAALQRPVRRSDRTINANTAHVFLLFILAVLLTVLVAFSPWPDTRRVTAETRTI.

This is an uncharacterized protein from Orgyia pseudotsugata multicapsid polyhedrosis virus (OpMNPV).